The following is a 349-amino-acid chain: Fructose-1,6-bisphosphatase class 1 (349 aa).

Mg(2+) contacts are provided by Glu92, Asp113, Leu115, and Asp116. Residues 116 to 119, Asn209, Tyr242, and Lys272 contribute to the substrate site; that span reads DGSS. Position 278 (Glu278) interacts with Mg(2+).

This sequence belongs to the FBPase class 1 family. As to quaternary structure, homotetramer. The cofactor is Mg(2+).

The protein localises to the cytoplasm. It catalyses the reaction beta-D-fructose 1,6-bisphosphate + H2O = beta-D-fructose 6-phosphate + phosphate. Its pathway is carbohydrate biosynthesis; Calvin cycle. This Chloroherpeton thalassium (strain ATCC 35110 / GB-78) protein is Fructose-1,6-bisphosphatase class 1.